Consider the following 478-residue polypeptide: Receptor-interacting serine/threonine-protein kinase 3 (478 aa).

Serine 2 carries the phosphoserine modification. Residues 22–290 (LENLGFVGKG…CESKTNNVYI (269 aa)) enclose the Protein kinase domain. Residues 28 to 36 (VGKGGFGAV) and lysine 51 each bind ATP. The Proton acceptor role is filled by aspartate 143. The residue at position 165 (serine 165) is a Phosphoserine. A Phosphothreonine modification is found at threonine 185. Serine 201 is subject to Phosphoserine; by autocatalysis. Residue threonine 228 is modified to Phosphothreonine. Serine 229 is subject to Phosphoserine; by autocatalysis. Threonine 254 bears the Phosphothreonine mark. A phosphoserine mark is found at serine 301 and serine 323. Residues 311 to 330 (RSSDTKLSARESSQKGTEVD) are disordered. The segment covering 313–330 (SDTKLSARESSQKGTEVD) has biased composition (basic and acidic residues). Phosphothreonine is present on threonine 335. Serine 350, serine 369, and serine 380 each carry phosphoserine. Residues 362 to 429 (ERRGKEASFG…RNSNPWYTWN (68 aa)) form a disordered region. Over residues 376–385 (AGTSSDTLAG) the composition is skewed to polar residues. Threonine 392 carries the post-translational modification Phosphothreonine. Residues 413-429 (QRNQGDGRNSNPWYTWN) show a composition bias toward polar residues. An RIP homotypic interaction motif (RHIM) motif is present at residues 437–461 (LQSIVLNNCSEVQIGQHNCMSVQPR). Arginine 474 is modified (omega-N-methylarginine).

Belongs to the protein kinase superfamily. TKL Ser/Thr protein kinase family. As to quaternary structure, interacts (via RIP homotypic interaction motif) with RIPK1 (via RIP homotypic interaction motif); this interaction induces RIPK1 phosphorylation and formation of a RIPK1-RIPK3 necrosis-inducing complex. Interacts with MLKL; the interaction is direct and triggers necroptosis. Interacts with ZBP1 (via RIP homotypic interaction motif); interaction with ZBP1 activates RIPK3, triggering necroptosis. Upon TNF-induced necrosis, the RIPK1-RIPK3 dimer further interacts with PGAM5 and MLKL; the formation of this complex leads to PGAM5 phosphorylation and increase in PGAM5 phosphatase activity. Binds TRAF2 and is recruited to the TNFR-1 signaling complex. Interacts with PYGL, GLUL and GLUD1; these interactions result in activation of these metabolic enzymes. Interacts with BIRC2/c-IAP1, BIRC3/c-IAP2 and XIAP/BIRC4. Interacts with ARHGEF2. Interacts with PELI1 (via atypical FHA domain); the phosphorylated form at Thr-185 binds preferentially to PELI1. Interacts with BUB1B, TRAF2 and STUB1. Interacts with CASP6. Component of the AIM2 PANoptosome complex, a multiprotein complex that drives inflammatory cell death (PANoptosis). RIPK1 and RIPK3 undergo reciprocal auto- and trans-phosphorylation. Autophosphorylated following interaction with ZBP1. Phosphorylation of Ser-201 plays a role in the necroptotic function of RIPK3. Autophosphorylates at Thr-228 and Ser-229 following activation by ZBP1: phosphorylation at these sites is a hallmark of necroptosis and is required for binding MLKL. Phosphorylation at Thr-185 is important for its kinase activity, interaction with PELI1 and for its ability to mediate TNF-induced necroptosis. In terms of processing, polyubiquitinated with 'Lys-48' and 'Lys-63'-linked chains by BIRC2/c-IAP1 and BIRC3/c-IAP2, leading to activation of NF-kappa-B. Ubiquitinated by STUB1 leading to its subsequent proteasome-dependent degradation.

The protein localises to the cytoplasm. It localises to the cytosol. The protein resides in the nucleus. It catalyses the reaction L-seryl-[protein] + ATP = O-phospho-L-seryl-[protein] + ADP + H(+). It carries out the reaction L-threonyl-[protein] + ATP = O-phospho-L-threonyl-[protein] + ADP + H(+). With respect to regulation, activity is stimulated by ZBP1, which senses double-stranded Z-RNA structures. RIPK3-dependent necroptosis is inhibited by RIPK1: RIPK1 prevents the ZBP1-induced activation of RIPK3 via FADD-mediated recruitment of CASP8, which cleaves RIPK1 and limits TNF-induced necroptosis. Its function is as follows. Serine/threonine-protein kinase that activates necroptosis and apoptosis, two parallel forms of cell death. Necroptosis, a programmed cell death process in response to death-inducing TNF-alpha family members, is triggered by RIPK3 following activation by ZBP1. Activated RIPK3 forms a necrosis-inducing complex and mediates phosphorylation of MLKL, promoting MLKL localization to the plasma membrane and execution of programmed necrosis characterized by calcium influx and plasma membrane damage. In addition to TNF-induced necroptosis, necroptosis can also take place in the nucleus in response to orthomyxoviruses infection: following ZBP1 activation, which senses double-stranded Z-RNA structures, nuclear RIPK3 catalyzes phosphorylation and activation of MLKL, promoting disruption of the nuclear envelope and leakage of cellular DNA into the cytosol. Also regulates apoptosis: apoptosis depends on RIPK1, FADD and CASP8, and is independent of MLKL and RIPK3 kinase activity. Phosphorylates RIPK1: RIPK1 and RIPK3 undergo reciprocal auto- and trans-phosphorylation. In some cell types, also able to restrict viral replication by promoting cell death-independent responses. In response to flavivirus infection in neurons, promotes a cell death-independent pathway that restricts viral replication: together with ZBP1, promotes a death-independent transcriptional program that modifies the cellular metabolism via up-regulation expression of the enzyme ACOD1/IRG1 and production of the metabolite itaconate. Itaconate inhibits the activity of succinate dehydrogenase, generating a metabolic state in neurons that suppresses replication of viral genomes. RIPK3 binds to and enhances the activity of three metabolic enzymes: GLUL, GLUD1, and PYGL. These metabolic enzymes may eventually stimulate the tricarboxylic acid cycle and oxidative phosphorylation, which could result in enhanced ROS production. This is Receptor-interacting serine/threonine-protein kinase 3 from Rattus norvegicus (Rat).